Here is a 628-residue protein sequence, read N- to C-terminus: ATP-dependent RNA helicase mrh4, mitochondrial (628 aa).

The N-terminal 40 residues, 1–40, are a transit peptide targeting the mitochondrion; sequence MSLAVRPPVCLLCRSGAPTLLPSSVSQVARSMATARLRRK. The disordered stretch occupies residues 51-109; that stretch reads AKSSINQKRSGKAKFGPWSGMNQTEAHIRGEPRSRSQAALRRSGEKAADTPRKSDSPLY. Positions 92 to 105 are enriched in basic and acidic residues; sequence RSGEKAADTPRKSD. Positions 137 to 170 match the Q motif motif; the sequence is TSFDHFPLLPVVRHSIFSQALPGLVDVTPTPIQR. The 213-residue stretch at 190–402 folds into the Helicase ATP-binding domain; sequence EDGDPQYDQY…RKRYPDIKRL (213 aa). ATP is bound at residue 203 to 210; sequence AETGSGKT. Positions 228–253 are enriched in basic and acidic residues; it reads DKENERKEEERKAKEKEERLKNRAFD. The segment at 228–260 is disordered; the sequence is DKENERKEEERKAKEKEERLKNRAFDLEPEEPP. The DEAD box motif lies at 349–352; the sequence is DEAD. Residues 456–628 form the Helicase C-terminal domain; that stretch reads YVGPNIKKIL…EGMFRGQALI (173 aa).

It belongs to the DEAD box helicase family. MRH4 subfamily.

Its subcellular location is the mitochondrion. The enzyme catalyses ATP + H2O = ADP + phosphate + H(+). Its function is as follows. ATP-binding RNA helicase involved in mitochondrial RNA metabolism. Required for maintenance of mitochondrial DNA. The chain is ATP-dependent RNA helicase mrh4, mitochondrial (mrh4) from Aspergillus oryzae (strain ATCC 42149 / RIB 40) (Yellow koji mold).